Here is a 409-residue protein sequence, read N- to C-terminus: Tyrosine--tRNA ligase (409 aa).

The short motif at Pro54–His63 is the 'HIGH' region element. The short motif at Lys238 to Ser242 is the 'KMSKS' region element. Position 241 (Lys241) interacts with ATP. The 61-residue stretch at Gln347–Leu407 folds into the S4 RNA-binding domain.

It belongs to the class-I aminoacyl-tRNA synthetase family. TyrS type 2 subfamily. As to quaternary structure, homodimer.

It is found in the cytoplasm. It carries out the reaction tRNA(Tyr) + L-tyrosine + ATP = L-tyrosyl-tRNA(Tyr) + AMP + diphosphate + H(+). Functionally, catalyzes the attachment of tyrosine to tRNA(Tyr) in a two-step reaction: tyrosine is first activated by ATP to form Tyr-AMP and then transferred to the acceptor end of tRNA(Tyr). The sequence is that of Tyrosine--tRNA ligase from Bordetella parapertussis (strain 12822 / ATCC BAA-587 / NCTC 13253).